A 341-amino-acid polypeptide reads, in one-letter code: Heat-inducible transcription repressor HrcA (341 aa).

The protein belongs to the HrcA family.

Functionally, negative regulator of class I heat shock genes (grpE-dnaK-dnaJ and groELS operons). Prevents heat-shock induction of these operons. This is Heat-inducible transcription repressor HrcA from Carboxydothermus hydrogenoformans (strain ATCC BAA-161 / DSM 6008 / Z-2901).